Reading from the N-terminus, the 274-residue chain is 16S rRNA (guanine(1405)-N(7))-methyltransferase (274 aa).

Residues 102 to 108 (HISTRER), Ala-133, Asp-156, 182 to 183 (DL), Leu-198, and Gln-207 each bind S-adenosyl-L-methionine.

It belongs to the methyltransferase superfamily. Aminoglycoside resistance family.

The catalysed reaction is guanosine(1405) in 16S rRNA + S-adenosyl-L-methionine = N(7)-methylguanosine(1405) in 16S rRNA + S-adenosyl-L-homocysteine. Functionally, specifically methylates the N(7) position of guanine 1405 in 16S rRNA. Confers resistance to various aminoglycosides, including gentamicin, kanamycin and sisomicin. The chain is 16S rRNA (guanine(1405)-N(7))-methyltransferase (sgm) from Micromonospora zionensis.